Consider the following 448-residue polypeptide: Probable tryptophanase (448 aa).

N6-(pyridoxal phosphate)lysine is present on lysine 253.

It belongs to the beta-eliminating lyase family. Pyridoxal 5'-phosphate is required as a cofactor.

The catalysed reaction is L-tryptophan + H2O = indole + pyruvate + NH4(+). The protein operates within amino-acid degradation; L-tryptophan degradation via pyruvate pathway; indole and pyruvate from L-tryptophan: step 1/1. This Halobacterium salinarum (strain ATCC 29341 / DSM 671 / R1) protein is Probable tryptophanase.